A 94-amino-acid chain; its full sequence is Large ribosomal subunit protein bL28A (94 aa).

Residues 63-94 (GHRGRRRAARAGSAPAHFARQAGSSLRTAAIL) are disordered. Low complexity predominate over residues 72–82 (RAGSAPAHFAR). Residues 84-94 (AGSSLRTAAIL) are compositionally biased toward polar residues.

It belongs to the bacterial ribosomal protein bL28 family.

The polypeptide is Large ribosomal subunit protein bL28A (rpmB1) (Mycobacterium bovis (strain ATCC BAA-935 / AF2122/97)).